The following is a 788-amino-acid chain: Integrin beta-3 (788 aa).

The N-terminal stretch at 1 to 26 (MRARPRPRPLWATVLALGALAGVGVG) is a signal peptide. Residues 27 to 718 (GPNICTTRGV…EEPECPKGPD (692 aa)) lie on the Extracellular side of the membrane. In terms of domain architecture, PSI spans 30–76 (ICTTRGVSSCQQCLAVSPMCAWCSDEALPLGSPRCDLKENLLKDNCA). Intrachain disulfides connect C31–C49, C39–C461, C42–C64, C52–C75, C203–C210, C258–C299, C400–C412, C432–C459, C463–C483, C474–C486, C488–C497, C499–C529, C512–C527, C521–C532, C534–C547, C549–C570, C554–C568, C562–C573, and C575–C584. N125 is a glycosylation site (N-linked (GlcNAc...) asparagine). Positions 135-377 (DYPVDIYYLM…QLIVDAYGKI (243 aa)) constitute a VWFA domain. The Mg(2+) site is built by S147 and S149. Residues S149, D152, D153, and D184 each contribute to the Ca(2+) site. The segment at 203 to 210 (CYDMKTTC) is involved in CX3CL1-, NRG1-, FGF1- and IGF1-binding. Ca(2+) contacts are provided by N241, D243, P245, E246, and D277. Mg(2+) is bound at residue E246. The CX3CL1-binding stretch occupies residues 293-313 (QPNDGQCHVGSDNHYSASTTM). An N-linked (GlcNAc...) asparagine glycan is attached at N346. M361 contributes to the Ca(2+) binding site. N397 is a glycosylation site (N-linked (GlcNAc...) asparagine). I-EGF domains follow at residues 463-498 (CQAQAEPNSHRCNNGNGTFECGVCRCGPGWLGSQCE), 499-548 (CSEE…KYCE), 549-585 (CDDFSCVRYKGEMCSGHGQCSCGDCLCDSDWTGYYCN), and 586-625 (CTTRTDTCMSSNGLLCSGRGKCECGSCVCIQPGSYGDTCE). A glycan (N-linked (GlcNAc...) asparagine) is linked at N478. N585 carries an N-linked (GlcNAc...) asparagine glycan. Cystine bridges form between C586–C609, C593–C607, C601–C612, C614–C624, C627–C630, C634–C681, C640–C661, C643–C657, and C689–C713. N-linked (GlcNAc...) asparagine glycosylation occurs at N680. Residues 719–741 (ILVVLLSVMGAILLIGLAALLIW) traverse the membrane as a helical segment. The Cytoplasmic portion of the chain corresponds to 742–788 (KLLITIHDRKEFAKFEEERARAKWDTANNPLYKEATSTFTNITYRGT). A Phosphothreonine modification is found at T767. Y773 is modified (phosphotyrosine). An LIR motif is present at residues 777 to 783 (TSTFTNI). T779 is subject to Phosphothreonine; by PDPK1 and PKB/AKT1; in vitro. Residue Y785 is modified to Phosphotyrosine.

The protein belongs to the integrin beta chain family. As to quaternary structure, heterodimer of an alpha and a beta subunit. Beta-3 (ITGB3) associates with either alpha-IIb (ITGA2B) or alpha-V (ITGAV). Isoform Beta-3C interacts with FLNB. Interacts with COMP. Interacts with PDIA6 following platelet stimulation. Interacts with SYK; upon activation by ITGB3 promotes platelet adhesion. Interacts with MYO10. Interacts with DAB2. Interacts with FERMT2. Interacts with EMP2; regulates the levels of the heterodimer ITGA5:ITGB3 integrin expression on the plasma membrane. Integrin ITGAV:ITGB3 interacts with FBLN5 (via N-terminus). ITGAV:ITGB3 interacts with CCN3. ITGAV:ITGB3 and ITGA2B:ITGB3 interact with SELP (via C-type lectin domain); the interaction mediates cell-cell interaction and adhesion. ITGAV:ITGB3 is found in a ternary complex with CX3CR1 and CX3CL1. ITGAV:ITGB3 is found in a ternary complex with NRG1 and ERBB3. ITGAV:ITGB3 is found in a ternary complex with FGF1 and FGFR1. ITGAV:ITGB3 interacts with FGF2; it is likely that FGF2 can simultaneously bind ITGAV:ITGB3 and FGF receptors. ITGAV:ITGB3 binds to IL1B. ITGAV:ITGB3 is found in a ternary complex with IGF1 and IGF1R. ITGAV:ITGB3 interacts with IGF2. ITGAV:ITGB3 interacts with FBN1. ITGAV:ITGB3 interacts with CD9, CD81 and CD151 (via second extracellular domain). Interacts (via the allosteric site (site 2)) with CXCL12 in a CXCR4-independent manner. Interacts with MXRA8/DICAM; the interaction inhibits ITGAV:ITGB3 heterodimer formation. ITGAV:ITGB3 interacts with PTN. Forms a complex with PTPRZ1 and PTN that stimulates endothelial cell migration through ITGB3 Tyr-773 phosphorylation. ITGAV:ITGB3 interacts with SLC6A4. Interacts with SLC6A4 (via C-terminus); this interaction regulates SLC6A4 trafficking. ITGA2B:ITGB3 interacts with PPIA/CYPA; the interaction is ROS and PPIase activity-dependent and is increased in the presence of thrombin. Interacts with tensin TNS3; TNS3 also interacts with PEAK1, thus acting as an adapter molecule to bridge the association of PEAK1 with ITGB3. Interacts with TM4SF19. (Microbial infection) Integrin ITGAV:ITGB3 interacts with herpes virus 8/HHV-8 glycoprotein B. In terms of assembly, (Microbial infection) Integrin ITGAV:ITGB3 interacts with coxsackievirus A9 capsid proteins. As to quaternary structure, (Microbial infection) Interacts with Hantaan virus glycoprotein G. (Microbial infection) Integrin ITGAV:ITGB3 interacts with cytomegalovirus/HHV-5 gH:gL proteins. In terms of assembly, (Microbial infection) Integrin ITGA5:ITGB3 interacts with human metapneumovirus fusion protein. As to quaternary structure, (Microbial infection) Integrin ITGAV:ITGB3 interacts with human parechovirus 1 capsid proteins. (Microbial infection) Integrin ITGAV:ITGB3 interacts with west nile virus envelope protein E. In terms of assembly, (Microbial infection) Interacts with HIV-1 Tat. ITGAV:ITGB3 interacts with AGRA2. In terms of processing, phosphorylated on tyrosine residues in response to thrombin-induced platelet aggregation. Probably involved in outside-in signaling. A peptide (AA 740-762) is capable of binding GRB2 only when both Tyr-773 and Tyr-785 are phosphorylated. Phosphorylation of Thr-779 inhibits SHC binding. As to expression, isoform beta-3A and isoform beta-3C are widely expressed. Isoform beta-3A is specifically expressed in osteoblast cells; isoform beta-3C is specifically expressed in prostate and testis.

It is found in the cell membrane. Its subcellular location is the cell projection. The protein localises to the lamellipodium membrane. The protein resides in the cell junction. It localises to the focal adhesion. It is found in the postsynaptic cell membrane. Its subcellular location is the synapse. Its function is as follows. Integrin alpha-V/beta-3 (ITGAV:ITGB3) is a receptor for cytotactin, fibronectin, laminin, matrix metalloproteinase-2, osteopontin, osteomodulin, prothrombin, thrombospondin, vitronectin and von Willebrand factor. Integrin alpha-IIb/beta-3 (ITGA2B:ITGB3) is a receptor for fibronectin, fibrinogen, plasminogen, prothrombin, thrombospondin and vitronectin. Integrins alpha-IIb/beta-3 and alpha-V/beta-3 recognize the sequence R-G-D in a wide array of ligands. Integrin alpha-IIb/beta-3 recognizes the sequence H-H-L-G-G-G-A-K-Q-A-G-D-V in fibrinogen gamma chain. Following activation integrin alpha-IIb/beta-3 brings about platelet/platelet interaction through binding of soluble fibrinogen. This step leads to rapid platelet aggregation which physically plugs ruptured endothelial surface. Fibrinogen binding enhances SELP expression in activated platelets. ITGAV:ITGB3 binds to fractalkine (CX3CL1) and acts as its coreceptor in CX3CR1-dependent fractalkine signaling. ITGAV:ITGB3 binds to NRG1 (via EGF domain) and this binding is essential for NRG1-ERBB signaling. ITGAV:ITGB3 binds to FGF1 and this binding is essential for FGF1 signaling. ITGAV:ITGB3 binds to FGF2 and this binding is essential for FGF2 signaling. ITGAV:ITGB3 binds to IGF1 and this binding is essential for IGF1 signaling. ITGAV:ITGB3 binds to IGF2 and this binding is essential for IGF2 signaling. ITGAV:ITGB3 binds to IL1B and this binding is essential for IL1B signaling. ITGAV:ITGB3 binds to PLA2G2A via a site (site 2) which is distinct from the classical ligand-binding site (site 1) and this induces integrin conformational changes and enhanced ligand binding to site 1. ITGAV:ITGB3 acts as a receptor for fibrillin-1 (FBN1) and mediates R-G-D-dependent cell adhesion to FBN1. In brain, plays a role in synaptic transmission and plasticity. Involved in the regulation of the serotonin neurotransmission, is required to localize to specific compartments within the synapse the serotonin receptor SLC6A4 and for an appropriate reuptake of serotonin. Controls excitatory synaptic strength by regulating GRIA2-containing AMPAR endocytosis, which affects AMPAR abundance and composition. ITGAV:ITGB3 act as a receptor for CD40LG. ITGAV:ITGB3 acts as a receptor for IBSP and promotes cell adhesion and migration to IBSP. Functionally, (Microbial infection) Integrin ITGAV:ITGB3 acts as a receptor for Herpes virus 8/HHV-8. (Microbial infection) Integrin ITGAV:ITGB3 acts as a receptor for Coxsackievirus A9. In terms of biological role, (Microbial infection) Acts as a receptor for Hantaan virus. Its function is as follows. (Microbial infection) Integrin ITGAV:ITGB3 acts as a receptor for Cytomegalovirus/HHV-5. Functionally, (Microbial infection) Integrin ITGA5:ITGB3 acts as a receptor for Human metapneumovirus. (Microbial infection) Integrin ITGAV:ITGB3 acts aP05556s a receptor for Human parechovirus 1. In terms of biological role, (Microbial infection) Integrin ITGAV:ITGB3 acts as a receptor for West nile virus. Its function is as follows. (Microbial infection) In case of HIV-1 infection, the interaction with extracellular viral Tat protein seems to enhance angiogenesis in Kaposi's sarcoma lesions. This is Integrin beta-3 from Homo sapiens (Human).